The primary structure comprises 325 residues: dITP/XTP pyrophosphatase (325 aa).

Positions 1–128 (MKEKIYEYKD…KKVSELGDTI (128 aa)) are unknown. Positions 129–324 (LIATRNEGKT…MEVFPAWQNA (196 aa)) are NTP pyrophosphatase. 132–137 (TRNEGK) contributes to the substrate binding site. Glu-165 and Asp-194 together coordinate Mg(2+). Asp-194 (proton acceptor) is an active-site residue. Substrate-binding positions include Ser-195, 278–281 (FGYD), Lys-301, and 306–307 (HR).

Belongs to the HAM1 NTPase family. Homodimer. The cofactor is Mg(2+).

The enzyme catalyses XTP + H2O = XMP + diphosphate + H(+). It carries out the reaction dITP + H2O = dIMP + diphosphate + H(+). It catalyses the reaction ITP + H2O = IMP + diphosphate + H(+). Pyrophosphatase that catalyzes the hydrolysis of nucleoside triphosphates to their monophosphate derivatives, with a high preference for the non-canonical purine nucleotides XTP (xanthosine triphosphate), dITP (deoxyinosine triphosphate) and ITP. Seems to function as a house-cleaning enzyme that removes non-canonical purine nucleotides from the nucleotide pool, thus preventing their incorporation into DNA/RNA and avoiding chromosomal lesions. The polypeptide is dITP/XTP pyrophosphatase (Streptococcus mutans serotype c (strain ATCC 700610 / UA159)).